Consider the following 246-residue polypeptide: tRNA (guanine-N(7)-)-methyltransferase (246 aa).

Residues E77, E102, D129, and D152 each coordinate S-adenosyl-L-methionine. Residue D152 is part of the active site. Residues K156, D188, and 225-228 (TKFE) contribute to the substrate site.

Belongs to the class I-like SAM-binding methyltransferase superfamily. TrmB family.

It carries out the reaction guanosine(46) in tRNA + S-adenosyl-L-methionine = N(7)-methylguanosine(46) in tRNA + S-adenosyl-L-homocysteine. It functions in the pathway tRNA modification; N(7)-methylguanine-tRNA biosynthesis. Functionally, catalyzes the formation of N(7)-methylguanine at position 46 (m7G46) in tRNA. This Haemophilus influenzae (strain 86-028NP) protein is tRNA (guanine-N(7)-)-methyltransferase.